The primary structure comprises 55 residues: Large ribosomal subunit protein bL33 (55 aa).

Belongs to the bacterial ribosomal protein bL33 family.

The sequence is that of Large ribosomal subunit protein bL33 from Bartonella bacilliformis (strain ATCC 35685 / KC583 / Herrer 020/F12,63).